Reading from the N-terminus, the 331-residue chain is Adenosine deaminase (331 aa).

Positions 12 and 14 each coordinate Zn(2+). Substrate contacts are provided by H14, D16, and G170. H197 provides a ligand contact to Zn(2+). E200 (proton donor) is an active-site residue. Residue D278 participates in Zn(2+) binding.

It belongs to the metallo-dependent hydrolases superfamily. Adenosine and AMP deaminases family. Adenosine deaminase subfamily. The cofactor is Zn(2+).

It carries out the reaction adenosine + H2O + H(+) = inosine + NH4(+). The catalysed reaction is 2'-deoxyadenosine + H2O + H(+) = 2'-deoxyinosine + NH4(+). In terms of biological role, catalyzes the hydrolytic deamination of adenosine and 2-deoxyadenosine. The protein is Adenosine deaminase of Shewanella woodyi (strain ATCC 51908 / MS32).